Reading from the N-terminus, the 513-residue chain is Na(+)/H(+) antiporter NhaB (513 aa).

Helical transmembrane passes span 21–41 (ICII…SPFV), 88–108 (IMAN…IYFM), 119–139 (LLIV…SATF), 243–263 (LPVS…LEHF), 299–318 (MGIQ…LHLA), 322–344 (IIGL…HAIG), 350–370 (PMPF…IVDL), 389–409 (LALF…VFVG), and 477–497 (MALP…EFLL).

The protein belongs to the NhaB Na(+)/H(+) (TC 2.A.34) antiporter family.

The protein resides in the cell inner membrane. It carries out the reaction 2 Na(+)(in) + 3 H(+)(out) = 2 Na(+)(out) + 3 H(+)(in). Na(+)/H(+) antiporter that extrudes sodium in exchange for external protons. This chain is Na(+)/H(+) antiporter NhaB, found in Actinobacillus pleuropneumoniae serotype 5b (strain L20).